We begin with the raw amino-acid sequence, 231 residues long: Ureidoacrylate amidohydrolase RutB (231 aa).

Aspartate 25 functions as the Proton acceptor in the catalytic mechanism. Lysine 134 is a catalytic residue. Cysteine 167 functions as the Nucleophile in the catalytic mechanism.

It belongs to the isochorismatase family. RutB subfamily.

It carries out the reaction (Z)-3-ureidoacrylate + H2O + H(+) = (Z)-3-aminoacrylate + NH4(+) + CO2. The enzyme catalyses (Z)-3-ureidoacrylate + H2O = (Z)-3-aminoacrylate + carbamate + H(+). The catalysed reaction is (Z)-2-methylureidoacrylate + H2O + H(+) = (Z)-2-methylaminoacrylate + NH4(+) + CO2. Hydrolyzes ureidoacrylate to form aminoacrylate and carbamate. The carbamate hydrolyzes spontaneously, thereby releasing one of the nitrogen atoms of the pyrimidine ring as ammonia and one of its carbon atoms as CO2. The chain is Ureidoacrylate amidohydrolase RutB from Escherichia coli O139:H28 (strain E24377A / ETEC).